Here is a 381-residue protein sequence, read N- to C-terminus: ELMO domain-containing protein 3 (381 aa).

Basic and acidic residues predominate over residues 1–17; the sequence is MNENFHSFHEKELRDGQ. The interval 1-31 is disordered; the sequence is MNENFHSFHEKELRDGQVESVSAGSSPPCDK. The ELMO domain maps to 170–324; sequence MHGRVLQTIY…DLEMSAKKSP (155 aa).

It is found in the cell projection. Its subcellular location is the stereocilium. The protein resides in the kinocilium. It localises to the cytoplasm. The protein localises to the cytoskeleton. Functionally, acts as a GTPase-activating protein (GAP) for ARL2 with low specific activity. This Bos taurus (Bovine) protein is ELMO domain-containing protein 3 (ELMOD3).